The sequence spans 355 residues: MPNPPEYEHLKNQVRILSLNGGGARGLFTISLLAEIERIIEEKQGINGFKVGDYFDLITGTSIGGILALGLAYGKSARELEDVFRKQAGYIFPEQKYPRFFPVFRRRYRLARGPLYDSKPLAKTIASMVGEESTFNDLKCRVLIPTVNLSTGKPQFFKTPHNPEFHRDGRIKLIDAALATSAAPTYFAPHYCVDLDSYFADGGLVANNPSFIGLHEVFRDMATDFPEAKVSDVKILNVGTLGEEYSLSPSSLAGKSGYLGLWGMGERLVLSAMAANQELHKAMLLREFATHDAIGNFVRLDNNIPHEAASDITLDNASASSLSNLASRGRQLATEEFTKNKALADFFKVPARKFK.

The PNPLA domain maps to 17–214 (LSLNGGGARG…VANNPSFIGL (198 aa)). The GXGXXG motif lies at 21–26 (GGGARG). Residues 60–64 (GTSIG) carry the GXSXG motif. S62 acts as the Nucleophile in catalysis. Catalysis depends on D201, which acts as the Proton acceptor. Residues 201–203 (DGG) carry the DGA/G motif.

The protein belongs to the patatin family.

The catalysed reaction is a 1,2-diacyl-sn-glycero-3-phosphocholine + H2O = a 2-acyl-sn-glycero-3-phosphocholine + a fatty acid + H(+). It catalyses the reaction 1,2-di-(9Z-octadecenoyl)-sn-glycero-3-phosphoethanolamine + 2 H2O = sn-glycero-3-phosphoethanolamine + 2 (9Z)-octadecenoate + 2 H(+). With respect to regulation, phospholipase activity is specifically activated upon 3',3'-cGAMP (cGAMP) binding. Is not activated by the other cyclic dinucleotides 3',3'-cUAMP, 3',3'-c-diAMP and 3',3'-c-diGMP. Therefore, is specifically activated by only the nucleotide synthesized from its adjacently encoded nucleotidyltransferase (DncV). The cGAMP-activation of lipase is inhibited by T4 phage protein Acb2 (Vs.4). Functionally, effector phospholipase of a CBASS antiviral system. CBASS (cyclic oligonucleotide-based antiphage signaling system) provides immunity against bacteriophages. The CD-NTase protein (DncV) synthesizes cyclic nucleotides in response to infection; these serve as specific second messenger signals. The signals activate a diverse range of effectors, leading to bacterial cell death and thus abortive phage infection. A type II-A(GA) CBASS system. Phospholipase that is activated upon binding to the cyclic dinucleotide (CDN) second messenger 3',3'-cyclic GMP-AMP (3',3'-cGAMP). Then degrades phosphatidylethanolamine (PE) and phosphatidylglycerol (PG), the major phospholipids in the cell membrane of V.cholerae, releasing 16:1 and 18:1 free fatty acids. Upon expression in E.coli with cognate DncV, the cell inner membrane shrinks and separates from the cell wall. Its function is as follows. Protects E.coli against phage infection. When the CBASS operon (capV-dncV-cap2-cap3) is introduced in E.coli MG1655 there is about 100-fold protection against phages P1 and T2. When the operon is introduced in E.coli MG1655 there is a more than 10(3) decrease in the efficiency of T2 plaque formation. Protects 100-fold against phage T5, offers no protection against T7. When the operon is introduced in E.coli MG1655 it protects against phages T2, T4, T5 and T6. Another paper shows the operon confers protection against phages P1, T2, T5 and T6 but not T4 or lambda. This chain is cGAMP-activated phospholipase, found in Vibrio cholerae serotype O1 (strain ATCC 39315 / El Tor Inaba N16961).